The sequence spans 244 residues: Orotidine 5'-phosphate decarboxylase (244 aa).

Substrate contacts are provided by residues D10, K32, 59-68 (DLKLHDIPNT), T122, R184, Q193, G213, and R214. K61 (proton donor) is an active-site residue.

The protein belongs to the OMP decarboxylase family. Type 1 subfamily. Homodimer.

It carries out the reaction orotidine 5'-phosphate + H(+) = UMP + CO2. Its pathway is pyrimidine metabolism; UMP biosynthesis via de novo pathway; UMP from orotate: step 2/2. Catalyzes the decarboxylation of orotidine 5'-monophosphate (OMP) to uridine 5'-monophosphate (UMP). This is Orotidine 5'-phosphate decarboxylase from Bacillus caldolyticus.